A 459-amino-acid polypeptide reads, in one-letter code: Zinc finger protein ZFP2 (459 aa).

13 consecutive C2H2-type zinc fingers follow at residues 100-122 (YGCD…QRIH), 128-150 (YTCN…QRTH), 156-178 (YKCH…QRTH), 184-206 (YQCK…ERIH), 212-234 (YKCH…QRTH), 240-262 (YECN…QRSH), 268-290 (YECS…QRNH), 296-318 (YKCN…QRLH), 324-346 (FECN…RRIH), 352-374 (YECM…QVIH), 380-402 (YECT…QRIH), 408-430 (YECD…QRIH), and 436-458 (YQCN…QRTH).

The protein belongs to the krueppel C2H2-type zinc-finger protein family.

It is found in the nucleus. In terms of biological role, probable transcription factor involved in neuronal differentiation and/or phenotypic maintenance. The polypeptide is Zinc finger protein ZFP2 (Zfp2) (Mus musculus (Mouse)).